A 505-amino-acid polypeptide reads, in one-letter code: Deoxyguanosinetriphosphate triphosphohydrolase (505 aa).

The HD domain occupies 66–273 (RLTHSMEVQQ…MEAADDISYC (208 aa)).

Belongs to the dGTPase family. Type 1 subfamily. As to quaternary structure, homotetramer. Requires Mg(2+) as cofactor.

The enzyme catalyses dGTP + H2O = 2'-deoxyguanosine + triphosphate + H(+). Its function is as follows. dGTPase preferentially hydrolyzes dGTP over the other canonical NTPs. The protein is Deoxyguanosinetriphosphate triphosphohydrolase of Salmonella choleraesuis (strain SC-B67).